A 704-amino-acid chain; its full sequence is Polyribonucleotide nucleotidyltransferase (704 aa).

D485 and D491 together coordinate Mg(2+). A KH domain is found at 552-611 (PKILTMTINPDKIRDVIGPSGKMINKIIEDTGVKIDIEQDGTIYISSADTNMNNKAREII). The S1 motif domain occupies 621-689 (GQMYLGTVKR…NQGRVNLSRK (69 aa)).

The protein belongs to the polyribonucleotide nucleotidyltransferase family. Mg(2+) is required as a cofactor.

Its subcellular location is the cytoplasm. The enzyme catalyses RNA(n+1) + phosphate = RNA(n) + a ribonucleoside 5'-diphosphate. In terms of biological role, involved in mRNA degradation. Catalyzes the phosphorolysis of single-stranded polyribonucleotides processively in the 3'- to 5'-direction. The chain is Polyribonucleotide nucleotidyltransferase from Halalkalibacterium halodurans (strain ATCC BAA-125 / DSM 18197 / FERM 7344 / JCM 9153 / C-125) (Bacillus halodurans).